Consider the following 962-residue polypeptide: Leucine--tRNA ligase (962 aa).

The 'HIGH' region motif lies at 41 to 51 (PYLNGNLHAGH). A 'KMSKS' region motif is present at residues 631-635 (KMSKS). Residue Lys634 participates in ATP binding.

The protein belongs to the class-I aminoacyl-tRNA synthetase family.

The protein localises to the cytoplasm. It carries out the reaction tRNA(Leu) + L-leucine + ATP = L-leucyl-tRNA(Leu) + AMP + diphosphate. This is Leucine--tRNA ligase from Methanococcoides burtonii (strain DSM 6242 / NBRC 107633 / OCM 468 / ACE-M).